The following is a 368-amino-acid chain: Histidinol-phosphate aminotransferase (368 aa).

Lys228 carries the N6-(pyridoxal phosphate)lysine modification.

It belongs to the class-II pyridoxal-phosphate-dependent aminotransferase family. Histidinol-phosphate aminotransferase subfamily. As to quaternary structure, homodimer. Pyridoxal 5'-phosphate is required as a cofactor.

It carries out the reaction L-histidinol phosphate + 2-oxoglutarate = 3-(imidazol-4-yl)-2-oxopropyl phosphate + L-glutamate. It participates in amino-acid biosynthesis; L-histidine biosynthesis; L-histidine from 5-phospho-alpha-D-ribose 1-diphosphate: step 7/9. The chain is Histidinol-phosphate aminotransferase (hisC) from Methylobacillus flagellatus.